Reading from the N-terminus, the 599-residue chain is Elongation factor 4 (599 aa).

The 183-residue stretch at Ser5–Thr187 folds into the tr-type G domain. GTP-binding positions include Asp17–Thr22 and Asn134–Asp137.

It belongs to the TRAFAC class translation factor GTPase superfamily. Classic translation factor GTPase family. LepA subfamily.

Its subcellular location is the cell inner membrane. The catalysed reaction is GTP + H2O = GDP + phosphate + H(+). In terms of biological role, required for accurate and efficient protein synthesis under certain stress conditions. May act as a fidelity factor of the translation reaction, by catalyzing a one-codon backward translocation of tRNAs on improperly translocated ribosomes. Back-translocation proceeds from a post-translocation (POST) complex to a pre-translocation (PRE) complex, thus giving elongation factor G a second chance to translocate the tRNAs correctly. Binds to ribosomes in a GTP-dependent manner. The sequence is that of Elongation factor 4 from Ruegeria sp. (strain TM1040) (Silicibacter sp.).